Reading from the N-terminus, the 555-residue chain is Protein peste (555 aa).

Residues 1 to 7 lie on the Cytoplasmic side of the membrane; the sequence is MTSRTRH. Residues 8–28 traverse the membrane as a helical segment; the sequence is CARLGIVLLGICCIASGIYLF. At 29-434 the chain is on the extracellular side; it reads RNWIDMFTRM…VRVSEEIAAD (406 aa). N-linked (GlcNAc...) asparagine glycosylation is found at Asn-70, Asn-110, Asn-129, Asn-213, Asn-242, Asn-312, and Asn-342. Residues 435–455 traverse the membrane as a helical segment; that stretch reads IALVPLIVLLGQIVTGILLAG. At 456–555 the chain is on the cytoplasmic side; it reads GLICTCWYPT…SEDSPDVVVR (100 aa).

Belongs to the CD36 family.

It is found in the cell membrane. Its function is as follows. (Microbial infection) Plays a role in mycobacterial infection. Mediates infection by M.fortuitum and uptake of M.smegmatis. In Drosophila melanogaster (Fruit fly), this protein is Protein peste.